The sequence spans 837 residues: Vacuolar membrane protease (837 aa).

At 1–36 the chain is on the cytoplasmic side; sequence MSEEEVHDTSSEASEVFTNQPNAFVRGVRSIFGYRK. A helical membrane pass occupies residues 37 to 57; it reads TSLTLFVILTIVVTAGLSFYD. Residues 58–355 lie on the Vacuolar side of the membrane; that stretch reads NSLELTIELP…FATPISALAR (298 aa). N-linked (GlcNAc...) asparagine glycosylation is present at Asn143. Zn(2+) contacts are provided by His157 and Asp169. Residue Glu201 is the Proton acceptor of the active site. Glu202, Glu227, and His299 together coordinate Zn(2+). The helical transmembrane segment at 356–376 threads the bilayer; sequence VNLVLLVLFPVVSTPLLFVIV. Over 377–384 the chain is Cytoplasmic; it reads KYKKWKLR. Residues 385–405 traverse the membrane as a helical segment; sequence VTNFLGVPLAMGLAVAVGQVG. At 406–415 the chain is on the vacuolar side; sequence NPMLVSSHPM. A helical membrane pass occupies residues 416-436; it reads MVVATTTSIVVLVYYVVLNGV. Over 437-446 the chain is Cytoplasmic; the sequence is DWVNTSSDQK. The helical transmembrane segment at 447 to 467 threads the bilayer; sequence LVTMIEVSFVYWVVLVYVTWS. Topologically, residues 468 to 474 are vacuolar; it reads GGDHTGE. Residues 475–495 form a helical membrane-spanning segment; that stretch reads FGVTVLFFVQASTSLLGLIGW. Residues 496–539 lie on the Cytoplasmic side of the membrane; that stretch reads TFTRVRGGDEPLLSGEEERYGTEDERDTEKPLVEHNYDWSLQYL. A helical transmembrane segment spans residues 540-560; sequence LIVPVSSLVVYNSGWLVLEGV. Residue Asn561 is glycosylated (N-linked (GlcNAc...) asparagine). Over 561–572 the chain is Vacuolar; it reads NKTVQESLASEH. A helical membrane pass occupies residues 573-593; sequence LIYWIVVVFSQFLVLPVVPFI. Residues 594-598 are Cytoplasmic-facing; it reads TKFNR. A helical membrane pass occupies residues 599–619; it reads YIVLGLSVVVVVGVLMSMAVH. The Vacuolar segment spans residues 620-837; it reads PFNQGSPMKL…LVGVVKHVDV (218 aa). N-linked (GlcNAc...) asparagine glycosylation is present at Asn689.

The protein belongs to the peptidase M28 family. The cofactor is Zn(2+).

It localises to the vacuole membrane. Functionally, may be involved in vacuolar sorting and osmoregulation. This chain is Vacuolar membrane protease, found in Candida albicans (strain SC5314 / ATCC MYA-2876) (Yeast).